Reading from the N-terminus, the 166-residue chain is 3-isopropylmalate dehydratase small subunit (166 aa).

Belongs to the LeuD family. LeuD type 2 subfamily. Heterodimer of LeuC and LeuD.

It carries out the reaction (2R,3S)-3-isopropylmalate = (2S)-2-isopropylmalate. It participates in amino-acid biosynthesis; L-leucine biosynthesis; L-leucine from 3-methyl-2-oxobutanoate: step 2/4. In terms of biological role, catalyzes the isomerization between 2-isopropylmalate and 3-isopropylmalate, via the formation of 2-isopropylmaleate. The sequence is that of 3-isopropylmalate dehydratase small subunit from Caldicellulosiruptor bescii (strain ATCC BAA-1888 / DSM 6725 / KCTC 15123 / Z-1320) (Anaerocellum thermophilum).